A 563-amino-acid polypeptide reads, in one-letter code: NAD-dependent malic enzyme (563 aa).

Y101 functions as the Proton donor in the catalytic mechanism. R154 contributes to the NAD(+) binding site. K172 serves as the catalytic Proton acceptor. 3 residues coordinate a divalent metal cation: E243, D244, and D267. Residues D267 and N416 each coordinate NAD(+).

Belongs to the malic enzymes family. Homotetramer. Requires Mg(2+) as cofactor. Mn(2+) is required as a cofactor.

It carries out the reaction (S)-malate + NAD(+) = pyruvate + CO2 + NADH. The catalysed reaction is oxaloacetate + H(+) = pyruvate + CO2. The polypeptide is NAD-dependent malic enzyme (Pseudomonas syringae pv. syringae (strain B728a)).